The following is a 180-amino-acid chain: UPF0227 protein YcfP (180 aa).

Belongs to the UPF0227 family.

In Salmonella paratyphi A (strain ATCC 9150 / SARB42), this protein is UPF0227 protein YcfP.